Reading from the N-terminus, the 250-residue chain is Triosephosphate isomerase (250 aa).

Position 9-11 (9-11 (NWK)) interacts with substrate. His-95 functions as the Electrophile in the catalytic mechanism. Glu-167 functions as the Proton acceptor in the catalytic mechanism. Substrate is bound by residues Gly-173, Ser-213, and 234 to 235 (GG).

The protein belongs to the triosephosphate isomerase family. As to quaternary structure, homodimer.

It localises to the cytoplasm. The catalysed reaction is D-glyceraldehyde 3-phosphate = dihydroxyacetone phosphate. It participates in carbohydrate biosynthesis; gluconeogenesis. The protein operates within carbohydrate degradation; glycolysis; D-glyceraldehyde 3-phosphate from glycerone phosphate: step 1/1. Involved in the gluconeogenesis. Catalyzes stereospecifically the conversion of dihydroxyacetone phosphate (DHAP) to D-glyceraldehyde-3-phosphate (G3P). The polypeptide is Triosephosphate isomerase (Flavobacterium johnsoniae (strain ATCC 17061 / DSM 2064 / JCM 8514 / BCRC 14874 / CCUG 350202 / NBRC 14942 / NCIMB 11054 / UW101) (Cytophaga johnsonae)).